The primary structure comprises 365 residues: tRNA-specific 2-thiouridylase MnmA (365 aa).

Residues 14 to 21 (AMSGGVDS) and Leu40 contribute to the ATP site. Cys108 (nucleophile) is an active-site residue. A disulfide bridge connects residues Cys108 and Cys204. Gly132 contributes to the ATP binding site. The interval 154–156 (KDQ) is interaction with tRNA. Cys204 serves as the catalytic Cysteine persulfide intermediate.

The protein belongs to the MnmA/TRMU family.

It localises to the cytoplasm. It carries out the reaction S-sulfanyl-L-cysteinyl-[protein] + uridine(34) in tRNA + AH2 + ATP = 2-thiouridine(34) in tRNA + L-cysteinyl-[protein] + A + AMP + diphosphate + H(+). Functionally, catalyzes the 2-thiolation of uridine at the wobble position (U34) of tRNA, leading to the formation of s(2)U34. In Rickettsia akari (strain Hartford), this protein is tRNA-specific 2-thiouridylase MnmA.